A 359-amino-acid polypeptide reads, in one-letter code: Guanine nucleotide-binding protein subunit alpha-11 (359 aa).

S-palmitoyl cysteine attachment occurs at residues Cys-9 and Cys-10. Residues 38 to 359 (RELKLLLLGT…QLNLKEYNLV (322 aa)) enclose the G-alpha domain. The G1 motif stretch occupies residues 41–54 (KLLLLGTGESGKST). Residues 46 to 53 (GTGESGKS) and 180 to 183 (LRVR) each bind GTP. Ser-53 is a binding site for Mg(2+). Residues 178-186 (DVLRVRVPT) are G2 motif. Thr-186 provides a ligand contact to Mg(2+). The tract at residues 201-210 (FRMVDVGGQR) is G3 motif. Positions 270-277 (ILFLNKKD) are G4 motif. GTP-binding positions include 274–277 (NKKD) and Ala-331. A G5 motif region spans residues 329–334 (TCATDT).

It belongs to the G-alpha family. G(q) subfamily. In terms of assembly, g proteins are composed of 3 units; alpha, beta and gamma. The alpha chain contains the guanine nucleotide binding site. Interacts with RGS22. Interacts with NTSR1.

It localises to the cell membrane. The protein localises to the cytoplasm. It catalyses the reaction GTP + H2O = GDP + phosphate + H(+). Guanine nucleotide-binding proteins (G proteins) function as transducers downstream of G protein-coupled receptors (GPCRs) in numerous signaling cascades. The alpha chain contains the guanine nucleotide binding site and alternates between an active, GTP-bound state and an inactive, GDP-bound state. Signaling by an activated GPCR promotes GDP release and GTP binding. The alpha subunit has a low GTPase activity that converts bound GTP to GDP, thereby terminating the signal. Both GDP release and GTP hydrolysis are modulated by numerous regulatory proteins. Signaling is mediated via phospholipase C-beta-dependent inositol lipid hydrolysis for signal propagation: activates phospholipase C-beta: following GPCR activation, GNA11 activates PLC-beta (PLCB1, PLCB2, PLCB3 or PLCB4), leading to production of diacylglycerol (DAG) and inositol 1,4,5-trisphosphate (IP3). Transduces FFAR4 signaling in response to long-chain fatty acids (LCFAs). Together with GNAQ, required for heart development. In the respiratory epithelium, transmits OXGR1-dependent signals that lead to downstream intracellular Ca(2+) release and mucocilliary clearance of airborne pathogens. This is Guanine nucleotide-binding protein subunit alpha-11 (GNA11) from Bos taurus (Bovine).